We begin with the raw amino-acid sequence, 567 residues long: D-lactate dehydrogenase [cytochrome], mitochondrial (567 aa).

The transit peptide at 1–56 (MAFASKFARSKTILSFLRPCRQLHSTPKSTGDVTVLSPVKGRRRLPTCWSSSLFPL) directs the protein to the mitochondrion. The 178-residue stretch at 142-319 (AVNIPDVVVF…TEITLRLQKI (178 aa)) folds into the FAD-binding PCMH-type domain.

The protein belongs to the FAD-binding oxidoreductase/transferase type 4 family. In terms of assembly, homodimer. FAD serves as cofactor. In terms of tissue distribution, expressed in leaves, stems, flowers and roots.

Its subcellular location is the mitochondrion. It carries out the reaction (R)-lactate + 2 Fe(III)-[cytochrome c] = 2 Fe(II)-[cytochrome c] + pyruvate + 2 H(+). Inhibited by cyanide ions. Its function is as follows. Catalyzes the stereospecific oxidation of D-lactate to pyruvate. Involved in the detoxification of methylglyoxal and D-lactate, but probably not involved in the metabolization of glycolate. The polypeptide is D-lactate dehydrogenase [cytochrome], mitochondrial (Arabidopsis thaliana (Mouse-ear cress)).